The primary structure comprises 415 residues: Intron-encoded DNA endonuclease aI3 (415 aa).

A COX1 exons 1 to 3 encoded region spans residues 1–81; that stretch reads MVQRWLYSTN…MPALIGGFGN (81 aa). Helical transmembrane passes span 16–36 and 57–77; these read VLYF…SLII and VLVV…ALIG. A COX1 intron 3 encoded region spans residues 82 to 415; it reads QKRYESNNNN…HLKNTYLENK (334 aa).

In the C-terminal section; belongs to the LAGLIDADG endonuclease family. The cofactor is Mg(2+). In terms of processing, the mature protein may arise from proteolytic cleavage of an in-frame translation of some COX1 exons plus the intron containing the aI3 open reading frame.

It localises to the mitochondrion. The protein localises to the membrane. Functionally, mitochondrial DNA endonuclease involved in intron homing. It introduces a specific double-strand break in the DNA of the COX1 gene and thus mediates the insertion of an intron, containing its own coding sequence (group I intron), into an intronless gene. Recognizes with high specificity and cleaves the sequence 5'-GGTTTTGGTAACTATTTATTAC-3'. The protein is Intron-encoded DNA endonuclease aI3 (AI3) of Saccharomyces cerevisiae (strain ATCC 204508 / S288c) (Baker's yeast).